The following is a 122-amino-acid chain: Aspartate 1-decarboxylase (122 aa).

The active-site Schiff-base intermediate with substrate; via pyruvic acid is the S25. Position 25 is a pyruvic acid (Ser) (S25). T57 is a substrate binding site. Catalysis depends on Y58, which acts as the Proton donor. 73–75 is a binding site for substrate; it reads GAA.

It belongs to the PanD family. Heterooctamer of four alpha and four beta subunits. Requires pyruvate as cofactor. In terms of processing, is synthesized initially as an inactive proenzyme, which is activated by self-cleavage at a specific serine bond to produce a beta-subunit with a hydroxyl group at its C-terminus and an alpha-subunit with a pyruvoyl group at its N-terminus.

It is found in the cytoplasm. It carries out the reaction L-aspartate + H(+) = beta-alanine + CO2. The protein operates within cofactor biosynthesis; (R)-pantothenate biosynthesis; beta-alanine from L-aspartate: step 1/1. Catalyzes the pyruvoyl-dependent decarboxylation of aspartate to produce beta-alanine. The chain is Aspartate 1-decarboxylase from Bordetella avium (strain 197N).